The primary structure comprises 97 residues: Co-chaperonin GroES (97 aa).

It belongs to the GroES chaperonin family. Heptamer of 7 subunits arranged in a ring. Interacts with the chaperonin GroEL.

It localises to the cytoplasm. Functionally, together with the chaperonin GroEL, plays an essential role in assisting protein folding. The GroEL-GroES system forms a nano-cage that allows encapsulation of the non-native substrate proteins and provides a physical environment optimized to promote and accelerate protein folding. GroES binds to the apical surface of the GroEL ring, thereby capping the opening of the GroEL channel. This Erwinia tasmaniensis (strain DSM 17950 / CFBP 7177 / CIP 109463 / NCPPB 4357 / Et1/99) protein is Co-chaperonin GroES.